Reading from the N-terminus, the 164-residue chain is Interferon gamma (164 aa).

A signal peptide spans 1–19; that stretch reads MTCQTYNLFVLSVIMIYYG. 2 N-linked (GlcNAc...) asparagine glycosylation sites follow: N42 and N61.

It belongs to the type II (or gamma) interferon family. Homodimer.

It localises to the secreted. Its function is as follows. Produced by lymphocytes activated by specific antigens or mitogens. IFN-gamma, in addition to having antiviral activity, has important immunoregulatory functions. It is a potent activator of macrophages, it has antiproliferative effects on transformed cells and it can potentiate the antiviral and antitumor effects of the type I interferons. This is Interferon gamma (IFNG) from Numida meleagris (Helmeted guineafowl).